We begin with the raw amino-acid sequence, 246 residues long: 5'-nucleotidase SurE (246 aa).

Positions 8, 9, 39, and 91 each coordinate a divalent metal cation.

This sequence belongs to the SurE nucleotidase family. A divalent metal cation is required as a cofactor.

The protein localises to the cytoplasm. The enzyme catalyses a ribonucleoside 5'-phosphate + H2O = a ribonucleoside + phosphate. Nucleotidase that shows phosphatase activity on nucleoside 5'-monophosphates. This is 5'-nucleotidase SurE from Actinobacillus succinogenes (strain ATCC 55618 / DSM 22257 / CCUG 43843 / 130Z).